The chain runs to 249 residues: MILELDCGNSFIKWRVLRAEAGALIAEGVVDSDGALVDNLRSLEKVSLVKCRLVSVRTEDETNLLIGLLKQEFGISVVCAAPAREMSGVKNGYDDYERLGLDRWLAMLGGFHLAKGACLVLDFGTAVTADFISADGEHLGGFICPGMPLMRNQLRTHTRKIRYGDLAAERALTSQAPGRNTVEAVERGCSLMLRGFVLTQLEMARSYWGDDYRVFITGGDAELVSDVAPEARVVSDLVFVGLAMACPLS.

Residue 6–13 (DCGNSFIK) coordinates ATP. Substrate-binding positions include Tyr-93 and 100-103 (GLDR). Asp-102 acts as the Proton acceptor in catalysis. Position 122 (Asp-122) interacts with K(+). Thr-125 is an ATP binding site. Thr-181 contributes to the substrate binding site.

This sequence belongs to the type III pantothenate kinase family. In terms of assembly, homodimer. It depends on NH4(+) as a cofactor. Requires K(+) as cofactor.

Its subcellular location is the cytoplasm. The catalysed reaction is (R)-pantothenate + ATP = (R)-4'-phosphopantothenate + ADP + H(+). It participates in cofactor biosynthesis; coenzyme A biosynthesis; CoA from (R)-pantothenate: step 1/5. Catalyzes the phosphorylation of pantothenate (Pan), the first step in CoA biosynthesis. In Pseudomonas fluorescens (strain Pf0-1), this protein is Type III pantothenate kinase.